We begin with the raw amino-acid sequence, 239 residues long: MELKDILKEGAQGLNIEITDAQINQLIKYKDILLEWNQKMNLTAIEEEKDVMIKHFLDSLSCIQSKYLKREGKMIDVGTGAGFPGVPLKIALPGIELTLLDSLRKRISFLEEVCAETKLGQVDFVHGRAEDIGQSKDYREKYDYAVSRAVAALNVLVEYCLPFVKVGGYFICQKGPQIIEELPDAEKAIKVLGGEVVEQISVDLPFSDITHHILVIKKIKQTPSKYPRKAGKPSKEPIK.

Residues Gly78, Phe83, 129-130 (AE), and Arg148 each bind S-adenosyl-L-methionine.

This sequence belongs to the methyltransferase superfamily. RNA methyltransferase RsmG family.

It localises to the cytoplasm. In terms of biological role, specifically methylates the N7 position of a guanine in 16S rRNA. The chain is Ribosomal RNA small subunit methyltransferase G from Alkaliphilus oremlandii (strain OhILAs) (Clostridium oremlandii (strain OhILAs)).